Consider the following 153-residue polypeptide: Protein C (153 aa).

Residues 16 to 42 form a disordered region; it reads SSETLTLLSNQEPLSMQDPPLVRSSTR. The segment covering 18 to 29 has biased composition (polar residues); it reads ETLTLLSNQEPL.

The polypeptide is Protein C (P/V/C) (Tupaia paramyxovirus (TPMV)).